A 572-amino-acid polypeptide reads, in one-letter code: Mitochondrial distribution and morphology protein 34 (572 aa).

An SMP-LTD domain is found at 1 to 195; it reads MAFNFNWSPL…LPAIIHRLSL (195 aa). Disordered stretches follow at residues 212 to 236, 321 to 426, 477 to 522, and 553 to 572; these read TASANGEGPGQDPLASPPQDPVDAL, VGSM…PDND, SATP…DNPT, and CGPFWDRHSQEESPPPAYGH. Residues 330–348 show a composition bias toward low complexity; sequence SASMVSSQSRSSTPSHTFS. A compositionally biased stretch (basic residues) spans 358–370; that stretch reads RHSKAHARKRKKR. A compositionally biased stretch (basic and acidic residues) spans 371 to 381; sequence VVDLRRPKTTD. Composition is skewed to polar residues over residues 387 to 400 and 500 to 511; these read SDESSFTESTSAPS and DSSAGSSRQLPS.

This sequence belongs to the MDM34 family. Component of the ER-mitochondria encounter structure (ERMES) or MDM complex, composed of mmm1, mdm10, mdm12 and mdm34.

It localises to the mitochondrion outer membrane. Functionally, component of the ERMES/MDM complex, which serves as a molecular tether to connect the endoplasmic reticulum (ER) and mitochondria. Components of this complex are involved in the control of mitochondrial shape and protein biogenesis, and function in nonvesicular lipid trafficking between the ER and mitochondria. Mdm34 is required for the interaction of the ER-resident membrane protein mmm1 and the outer mitochondrial membrane-resident beta-barrel protein mdm10. This Aspergillus fumigatus (strain CBS 144.89 / FGSC A1163 / CEA10) (Neosartorya fumigata) protein is Mitochondrial distribution and morphology protein 34.